The following is a 229-amino-acid chain: 7-cyano-7-deazaguanine synthase (229 aa).

8 to 18 (FSGGQDSTTCL) serves as a coordination point for ATP. Residues C187, C196, C199, and C202 each contribute to the Zn(2+) site.

The protein belongs to the QueC family. The cofactor is Zn(2+).

It catalyses the reaction 7-carboxy-7-deazaguanine + NH4(+) + ATP = 7-cyano-7-deazaguanine + ADP + phosphate + H2O + H(+). It participates in purine metabolism; 7-cyano-7-deazaguanine biosynthesis. Catalyzes the ATP-dependent conversion of 7-carboxy-7-deazaguanine (CDG) to 7-cyano-7-deazaguanine (preQ(0)). The chain is 7-cyano-7-deazaguanine synthase from Shewanella halifaxensis (strain HAW-EB4).